The following is a 225-amino-acid chain: Ribonuclease 3 (225 aa).

The RNase III domain maps to 4-133 (FEKLEKLLGY…LIAAIYLDSN (130 aa)). Glu-46 is a Mg(2+) binding site. The active site involves Asp-50. 2 residues coordinate Mg(2+): Asn-119 and Glu-122. Residue Glu-122 is part of the active site. Residues 158–225 (DPKTALQEWA…AARKLLHKLK (68 aa)) enclose the DRBM domain.

The protein belongs to the ribonuclease III family. In terms of assembly, homodimer. The cofactor is Mg(2+).

Its subcellular location is the cytoplasm. It carries out the reaction Endonucleolytic cleavage to 5'-phosphomonoester.. Its function is as follows. Digests double-stranded RNA. Involved in the processing of primary rRNA transcript to yield the immediate precursors to the large and small rRNAs (23S and 16S). Processes some mRNAs, and tRNAs when they are encoded in the rRNA operon. Processes pre-crRNA and tracrRNA of type II CRISPR loci if present in the organism. The chain is Ribonuclease 3 from Rickettsia felis (strain ATCC VR-1525 / URRWXCal2) (Rickettsia azadi).